The following is a 146-amino-acid chain: Large ribosomal subunit protein uL11 (146 aa).

This sequence belongs to the universal ribosomal protein uL11 family. Part of the ribosomal stalk of the 50S ribosomal subunit. Interacts with L10 and the large rRNA to form the base of the stalk. L10 forms an elongated spine to which L12 dimers bind in a sequential fashion forming a multimeric L10(L12)X complex. Post-translationally, one or more lysine residues are methylated.

Forms part of the ribosomal stalk which helps the ribosome interact with GTP-bound translation factors. This Blochmanniella floridana protein is Large ribosomal subunit protein uL11.